Consider the following 376-residue polypeptide: Heterodimeric geranylgeranyl pyrophosphate synthase large subunit 2 (376 aa).

A signal peptide spans 1–24 (MEPQILFLYLSLFILSLNFFFTNL). The isopentenyl diphosphate site is built by K125, R128, and H157. Residues D164 and D170 each contribute to the Mg(2+) site. R175 is a dimethylallyl diphosphate binding site. R176 contributes to the isopentenyl diphosphate binding site. Residues K261, T262, Q299, K316, and K326 each coordinate dimethylallyl diphosphate.

The protein belongs to the FPP/GGPP synthase family. Monomer. Part of a heterodimeric geranyl(geranyl)diphosphate synthase. Interacts with GGR. It depends on Mg(2+) as a cofactor. Mainly expressed in flowers.

It is found in the endoplasmic reticulum. The enzyme catalyses isopentenyl diphosphate + dimethylallyl diphosphate = (2E)-geranyl diphosphate + diphosphate. The catalysed reaction is isopentenyl diphosphate + (2E)-geranyl diphosphate = (2E,6E)-farnesyl diphosphate + diphosphate. It catalyses the reaction isopentenyl diphosphate + (2E,6E)-farnesyl diphosphate = (2E,6E,10E)-geranylgeranyl diphosphate + diphosphate. The protein operates within isoprenoid biosynthesis; farnesyl diphosphate biosynthesis; farnesyl diphosphate from geranyl diphosphate and isopentenyl diphosphate: step 1/1. Its pathway is isoprenoid biosynthesis; geranyl diphosphate biosynthesis; geranyl diphosphate from dimethylallyl diphosphate and isopentenyl diphosphate: step 1/1. It participates in isoprenoid biosynthesis; geranylgeranyl diphosphate biosynthesis; geranylgeranyl diphosphate from farnesyl diphosphate and isopentenyl diphosphate: step 1/1. Heterodimeric geranyl(geranyl)-diphosphate (GPP) synthase large subunit. In vitro, the large subunit catalyzes mainly the trans-addition of the three molecules of IPP onto DMAPP to form geranylgeranyl pyrophosphate while the small subunit alone is inactive. Upon association of the two subunits, the product profile is not changed. In Arabidopsis thaliana (Mouse-ear cress), this protein is Heterodimeric geranylgeranyl pyrophosphate synthase large subunit 2 (GGPPS2).